Consider the following 296-residue polypeptide: Zinc finger CCCH-type antiviral protein 1-like (296 aa).

Residue alanine 2 is modified to N-acetylalanine. C3H1-type zinc fingers lie at residues 111 to 136 (LCRR…HDIH) and 198 to 219 (VCKS…HQLI).

The chain is Zinc finger CCCH-type antiviral protein 1-like (Zc3hav1l) from Mus musculus (Mouse).